Here is a 371-residue protein sequence, read N- to C-terminus: Aspartate-semialdehyde dehydrogenase (371 aa).

NADP(+) contacts are provided by residues 9–12 (RGMV), 37–38 (TS), and glutamine 73. Arginine 102 contacts phosphate. Cysteine 135 (acyl-thioester intermediate) is an active-site residue. Glutamine 162 is a binding site for substrate. NADP(+) contacts are provided by residues 165–166 (SG) and proline 193. Residue glutamate 241 participates in substrate binding. A phosphate-binding site is contributed by lysine 244. Arginine 268 contributes to the substrate binding site. Catalysis depends on histidine 275, which acts as the Proton acceptor. Glutamine 351 is an NADP(+) binding site.

Belongs to the aspartate-semialdehyde dehydrogenase family. As to quaternary structure, homodimer.

It catalyses the reaction L-aspartate 4-semialdehyde + phosphate + NADP(+) = 4-phospho-L-aspartate + NADPH + H(+). Its pathway is amino-acid biosynthesis; L-lysine biosynthesis via DAP pathway; (S)-tetrahydrodipicolinate from L-aspartate: step 2/4. It functions in the pathway amino-acid biosynthesis; L-methionine biosynthesis via de novo pathway; L-homoserine from L-aspartate: step 2/3. It participates in amino-acid biosynthesis; L-threonine biosynthesis; L-threonine from L-aspartate: step 2/5. Functionally, catalyzes the NADPH-dependent formation of L-aspartate-semialdehyde (L-ASA) by the reductive dephosphorylation of L-aspartyl-4-phosphate. The protein is Aspartate-semialdehyde dehydrogenase of Neisseria meningitidis serogroup B (strain ATCC BAA-335 / MC58).